A 242-amino-acid chain; its full sequence is Endothelial protein C receptor (242 aa).

A signal peptide spans 1–17; that stretch reads MLTKFLPLLLLLLPGCA. Over 18-214 the chain is Extracellular; it reads LCNSDGSQSL…GSQTGRSYTS (197 aa). N-linked (GlcNAc...) asparagine glycans are attached at residues Asn-46, Asn-63, Asn-140, Asn-166, and Asn-176. Disulfide bonds link Cys-119-Cys-190 and Cys-223-Cys-236. Residues 215-235 traverse the membrane as a helical segment; it reads LVLGILMGCFIIAGVAVGIFM. Topologically, residues 236–242 are cytoplasmic; sequence CTSGRRC.

As to expression, expressed in endothelial cells.

The protein localises to the membrane. In terms of biological role, binds activated protein C. Enhances protein C activation by the thrombin-thrombomodulin complex; plays a role in the protein C pathway controlling blood coagulation. In Mus musculus (Mouse), this protein is Endothelial protein C receptor (Procr).